Consider the following 55-residue polypeptide: Riparin-1.4 (55 aa).

The N-terminal stretch at 1-15 is a signal peptide; the sequence is MKIIVVLAVLMLVSA. Positions 16–41 are excised as a propeptide; it reads QVCLVSAAEMGHSSDNELSSRDLVKR. Cys47 and Cys53 are joined by a disulfide. A propeptide spanning residues 54-55 is cleaved from the precursor; that stretch reads NH.

In terms of tissue distribution, expressed by the skin glands.

The protein localises to the secreted. The polypeptide is Riparin-1.4 (Crinia riparia (Streambank froglet)).